The sequence spans 236 residues: 2-C-methyl-D-erythritol 4-phosphate cytidylyltransferase (236 aa).

It belongs to the IspD/TarI cytidylyltransferase family. IspD subfamily.

It catalyses the reaction 2-C-methyl-D-erythritol 4-phosphate + CTP + H(+) = 4-CDP-2-C-methyl-D-erythritol + diphosphate. It functions in the pathway isoprenoid biosynthesis; isopentenyl diphosphate biosynthesis via DXP pathway; isopentenyl diphosphate from 1-deoxy-D-xylulose 5-phosphate: step 2/6. Functionally, catalyzes the formation of 4-diphosphocytidyl-2-C-methyl-D-erythritol from CTP and 2-C-methyl-D-erythritol 4-phosphate (MEP). The polypeptide is 2-C-methyl-D-erythritol 4-phosphate cytidylyltransferase (Burkholderia vietnamiensis (strain G4 / LMG 22486) (Burkholderia cepacia (strain R1808))).